Consider the following 789-residue polypeptide: Alpha-glucosidase 2 (789 aa).

2 disordered regions span residues Met-1 to Ile-24 and Glu-512 to Pro-531. The active-site Proton donor is the Asp-523. Residue Glu-756 is the Proton acceptor of the active site.

Belongs to the glycosyl hydrolase 63 family.

Its pathway is glycan metabolism; N-glycan degradation. The chain is Alpha-glucosidase 2 (GCS2) from Arabidopsis thaliana (Mouse-ear cress).